Consider the following 461-residue polypeptide: Signal recognition particle receptor FtsY (461 aa).

The stretch at 105-138 (FESLYNVAKIYHQLEKPDKALEYAQRAEKLVPYE) is one TPR repeat. Residues 267–274 (GVNGSGKT), 349–353 (DTAGR), and 413–416 (TKLD) each bind GTP.

Belongs to the GTP-binding SRP family. FtsY subfamily. As to quaternary structure, part of the signal recognition particle protein translocation system, which is composed of SRP and FtsY.

The protein localises to the cell inner membrane. It is found in the cytoplasm. It carries out the reaction GTP + H2O = GDP + phosphate + H(+). Functionally, involved in targeting and insertion of nascent membrane proteins into the cytoplasmic membrane. Acts as a receptor for the complex formed by the signal recognition particle (SRP) and the ribosome-nascent chain (RNC). This is Signal recognition particle receptor FtsY from Aquifex aeolicus (strain VF5).